The sequence spans 496 residues: Glutamate--cysteine ligase B, chloroplastic (496 aa).

The transit peptide at 1–34 (MAVASRLAVARVAPDGGAAGRRRRRRGRPVVAVP) directs the protein to the chloroplast. The tract at residues 14–53 (PDGGAAGRRRRRRGRPVVAVPTAAGRGRGRGGAVAASPPT) is disordered. Positions 29 to 38 (PVVAVPTAAG) are enriched in low complexity. A disulfide bridge links Cys-160 with Cys-380.

Belongs to the carboxylate-amine ligase family. Glutamate--cysteine ligase type 2 subfamily. In terms of assembly, homodimer or monomer when oxidized or reduced, respectively. The Cys-160-Cys-380 disulfide bridge is known to modulate the enzyme activity according to the redox status. The oxidized form constitutes the active enzyme.

Its subcellular location is the plastid. The protein localises to the chloroplast. The catalysed reaction is L-cysteine + L-glutamate + ATP = gamma-L-glutamyl-L-cysteine + ADP + phosphate + H(+). It participates in sulfur metabolism; glutathione biosynthesis; glutathione from L-cysteine and L-glutamate: step 1/2. The polypeptide is Glutamate--cysteine ligase B, chloroplastic (GSH1-2) (Oryza sativa subsp. japonica (Rice)).